We begin with the raw amino-acid sequence, 766 residues long: MNVNQVAENLALSHQEELVDLPKNYPLSENEDEGDSDGERKHQKLLEAIISLDGKNRRKLAERSEASLKVSEFSVSSEGSGEKLGLADLLEPVKTSSSLATVKKQLNRVKSKKVVELPLNKEKIEQIHREVAFSKTSQVLSKWDPIILKNQQAEQLVFPLGKEQPAIAPIEHALSGWKARTPLEQEIFNLLHKNKQPVTDPLLTPMEKASLQAMSLEEAKMHRAELQRARALQSYYEAKARKEKKIKSKKYHKVVKKGKAKKALKEFEQLQKVNPTVALEEMEKIENARMMERMSLKHQNSGKWAKSKAIMAKYDLEARQAMQEQLAKNKELTQKLQVASESEEEEGGTEVEELLVPHVANEVQMNVDGPNPWMFRSCTSDTKEAATQEDPEQVPELAAHEVSASEAEERPVAEEEILLREFEERQSLRKRSELNQDAEPASSQETKDSSSQEVLSELRALSQKLKEKHQSRKQKASSEGTVPQVQREEPAPEEAEPLLLQRSERVQTLEELEELGKEDCFQNKELPRPVLEGQQSERTPNNRPDAPKEKKEKEQLINLQNFLTTQSPSVRSLAVPTIIEELEDEEERDQRQMIKEAFAGDDVIRDFLKEKREAVEASKPKDVDLTLPGWGEWGGVGLKPSAKKRRQFLIKAPEGPPRKDKNLPNVIISEKRNIHAAAHQVQVLPYPFTHHRQFERTIQTPIGSTWNTQRAFQKLTTPKVVTKPGHIIKPIKAEDVGYQSSSRSDLPVIQRNPKRITTRHNKEEKL.

The disordered stretch occupies residues 14-42 (HQEELVDLPKNYPLSENEDEGDSDGERKH). 4 positions are modified to phosphoserine: serine 28, serine 51, serine 76, and serine 80. A Glycyl lysine isopeptide (Lys-Gly) (interchain with G-Cter in SUMO2) cross-link involves residue lysine 121. Position 204 is a phosphothreonine (threonine 204). Coiled-coil stretches lie at residues 216–245 (LEEAKMHRAELQRARALQSYYEAKARKEKK) and 316–346 (LEARQAMQEQLAKNKELTQKLQVASESEEEE). A disordered region spans residues 365-563 (MNVDGPNPWM…EQLINLQNFL (199 aa)). Positions 396–405 (ELAAHEVSAS) are enriched in low complexity. Residues serine 403 and serine 405 each carry the phosphoserine modification. Positions 407 to 434 (AEERPVAEEEILLREFEERQSLRKRSEL) are enriched in basic and acidic residues. Serine 443 carries the post-translational modification Phosphoserine. Lysine 447 participates in a covalent cross-link: Glycyl lysine isopeptide (Lys-Gly) (interchain with G-Cter in SUMO2). Serine 451 is modified (phosphoserine). Positions 452-470 (QEVLSELRALSQKLKEKHQ) form a coiled coil. Residues 466–475 (KEKHQSRKQK) are compositionally biased toward basic residues. Basic and acidic residues predominate over residues 502 to 527 (RSERVQTLEELEELGKEDCFQNKELP). Residue lysine 517 forms a Glycyl lysine isopeptide (Lys-Gly) (interchain with G-Cter in SUMO2) linkage. Polar residues predominate over residues 533–542 (GQQSERTPNN). A compositionally biased stretch (basic and acidic residues) spans 545 to 555 (DAPKEKKEKEQ). Serine 567 carries the phosphoserine modification. Residue lysine 732 forms a Glycyl lysine isopeptide (Lys-Gly) (interchain with G-Cter in SUMO2) linkage. Positions 734-766 (EDVGYQSSSRSDLPVIQRNPKRITTRHNKEEKL) are disordered.

It belongs to the UTP14 family. In terms of tissue distribution, expressed in testis.

It is found in the nucleus. The protein localises to the nucleolus. Essential for spermatogenesis. May be required specifically for ribosome biogenesis and hence protein synthesis during male meiosis. This is U3 small nucleolar RNA-associated protein 14 homolog C (UTP14C) from Homo sapiens (Human).